Consider the following 1251-residue polypeptide: Probable transcription factor TDA9 (1251 aa).

2 C2H2-type zinc fingers span residues 61–83 (FLCH…QRAH) and 89–112 (FLCV…HKLH). Disordered stretches follow at residues 160–227 (VQLK…KSKR) and 398–428 (NHSH…IEKS). Over residues 164-173 (KAAKEKKNGK) the composition is skewed to basic residues. Positions 183–202 (YGANNHSTDVSPSVGNSSTP) are enriched in polar residues. Residues 407 to 428 (NNSSSGINYSNNKNNNESIEKS) are compositionally biased toward low complexity. S527 and S603 each carry phosphoserine. Residues 617-634 (SLTPSLTTQTATTQSGPG) show a composition bias toward low complexity. The segment at 617–636 (SLTPSLTTQTATTQSGPGWT) is disordered.

This sequence belongs to the RSF2/TDA9 family.

The protein resides in the nucleus. In terms of biological role, DNA-binding protein that acts probably as a transcription factor. This Saccharomyces cerevisiae (strain ATCC 204508 / S288c) (Baker's yeast) protein is Probable transcription factor TDA9 (TDA9).